The following is a 28-amino-acid chain: Trypsin inhibitor A (28 aa).

Intrachain disulfides connect Cys3–Cys20, Cys10–Cys22, and Cys16–Cys27.

The protein belongs to the protease inhibitor I7 (squash-type serine protease inhibitor) family.

Its subcellular location is the secreted. Functionally, inhibits trypsin. The sequence is that of Trypsin inhibitor A from Momordica charantia (Bitter gourd).